We begin with the raw amino-acid sequence, 319 residues long: Acetylglutamate kinase (319 aa).

Substrate-binding positions include 74–75 (GG), Arg96, and Asn210.

This sequence belongs to the acetylglutamate kinase family. ArgB subfamily.

The protein localises to the cytoplasm. It catalyses the reaction N-acetyl-L-glutamate + ATP = N-acetyl-L-glutamyl 5-phosphate + ADP. It functions in the pathway amino-acid biosynthesis; L-arginine biosynthesis; N(2)-acetyl-L-ornithine from L-glutamate: step 2/4. In terms of biological role, catalyzes the ATP-dependent phosphorylation of N-acetyl-L-glutamate. The polypeptide is Acetylglutamate kinase (Pseudarthrobacter chlorophenolicus (strain ATCC 700700 / DSM 12829 / CIP 107037 / JCM 12360 / KCTC 9906 / NCIMB 13794 / A6) (Arthrobacter chlorophenolicus)).